A 159-amino-acid chain; its full sequence is Transcriptional repressor NrdR (159 aa).

Polar residues predominate over residues 1–11 (MQCPTCQNTDS). The segment at 1–21 (MQCPTCQNTDSRVLESRSADS) is disordered. A zinc finger lies at 3–34 (CPTCQNTDSRVLESRSADSGKSVRRRRECLNC). Positions 49–139 (VSVLKKDGSR…VYRKFNGVKD (91 aa)) constitute an ATP-cone domain.

Belongs to the NrdR family. Zn(2+) serves as cofactor.

Its function is as follows. Negatively regulates transcription of bacterial ribonucleotide reductase nrd genes and operons by binding to NrdR-boxes. The polypeptide is Transcriptional repressor NrdR (Prochlorococcus marinus (strain MIT 9301)).